The chain runs to 738 residues: Melanotransferrin (738 aa).

The first 19 residues, 1–19, serve as a signal peptide directing secretion; it reads MRGPSGALWLLLALRTVLG. An antigenic epitope region spans residues 20 to 30; it reads GMEVRWCATSD. Transferrin-like domains are found at residues 23 to 357 and 366 to 706; these read VRWC…GLLC and LRWC…GMSS. Cystine bridges form between Cys26/Cys63 and Cys36/Cys54. N-linked (GlcNAc...) asparagine glycosylation occurs at Asn38. Fe(3+) contacts are provided by Asp78 and Tyr107. 4 disulfides stabilise this stretch: Cys130/Cys216, Cys172/Cys189, Cys186/Cys199, and Cys257/Cys271. Thr132 lines the hydrogencarbonate pocket. A glycan (N-linked (GlcNAc...) asparagine) is linked at Asn135. Arg136, Val138, and Gly139 together coordinate hydrogencarbonate. Position 210 (Tyr210) interacts with Fe(3+). Residues His279, Ser421, and Tyr451 each coordinate Fe(3+). At Ser462 the chain carries Phosphoserine; by FAM20C. Asn515 carries an N-linked (GlcNAc...) asparagine glycan. Residues Tyr556 and His625 each coordinate Fe(3+). The GPI-anchor amidated cysteine moiety is linked to residue Cys709. Positions 710–738 are cleaved as a propeptide — removed in mature form; it reads SGAAAPAPGAPLLPLLLPALAARLLPPAL.

The protein belongs to the transferrin family. Found predominantly in human melanomas and in certain fetal tissues; also found in liver, epithelium, umbilical chord, placenta and sweat gland ducts.

Its subcellular location is the cell membrane. Functionally, involved in iron cellular uptake. Seems to be internalized and then recycled back to the cell membrane. Binds a single atom of iron per subunit. Could also bind zinc. The chain is Melanotransferrin from Homo sapiens (Human).